Reading from the N-terminus, the 220-residue chain is V-set and transmembrane domain-containing protein 2-like protein (220 aa).

The signal sequence occupies residues 1–24 (MGAPLAAALGALHYLALFLQLGGA). Residues 41–158 (ALFTETPHDM…DGGRGVPRVL (118 aa)) enclose the Ig-like domain. Cysteines 62 and 142 form a disulfide. Positions 165–180 (PAPPRAPRPRGQPPGE) are enriched in pro residues. A disordered region spans residues 165–220 (PAPPRAPRPRGQPPGEEPGRGPTLLFLIILPGTGSGTPREAEPHQPHAGGCPARQS).

The polypeptide is V-set and transmembrane domain-containing protein 2-like protein (Vstm2l) (Mus musculus (Mouse)).